The following is a 245-amino-acid chain: Eukaryotic translation initiation factor 6 (245 aa).

Phosphotyrosine is present on Tyr113. Thr165 bears the Phosphothreonine mark. Ser166 is modified (phosphoserine). 2 positions are modified to phosphoserine; by CK1: Ser174 and Ser175. A Phosphoserine; by PKC modification is found at Ser235. 2 positions are modified to phosphoserine: Ser239 and Ser243.

It belongs to the eIF-6 family. As to quaternary structure, monomer. Associates with the 60S ribosomal subunit. Interacts with RACK1. Interacts with DICER1, AGO2, TARBP2, MOV10 and RPL7A; they form a large RNA-induced silencing complex (RISC). In terms of processing, phosphorylation at Ser-174 and Ser-175 by CSNK1D/CK1 promotes nuclear export. Ufmylated by UFL1. In terms of tissue distribution, detected in bladder, duodenum, liver, esophagus, pancreas, adipose tissue, megakaryocytes and testis with lower levels in muscle (at protein level).

The protein localises to the cytoplasm. It is found in the nucleus. Its subcellular location is the nucleolus. Its function is as follows. Binds to the 60S ribosomal subunit and prevents its association with the 40S ribosomal subunit to form the 80S initiation complex in the cytoplasm. Behaves as a stimulatory translation initiation factor downstream insulin/growth factors. Is also involved in ribosome biogenesis. Associates with pre-60S subunits in the nucleus and is involved in its nuclear export. Cytoplasmic release of TIF6 from 60S subunits and nuclear relocalization is promoted by a RACK1 (RACK1)-dependent protein kinase C activity. In tissues responsive to insulin, controls fatty acid synthesis and glycolysis by exerting translational control of adipogenic transcription factors such as CEBPB, CEBPD and ATF4 that have G/C rich or uORF in their 5'UTR. Required for ROS-dependent megakaryocyte maturation and platelets formation, controls the expression of mitochondrial respiratory chain genes involved in reactive oxygen species (ROS) synthesis. Involved in miRNA-mediated gene silencing by the RNA-induced silencing complex (RISC). Required for both miRNA-mediated translational repression and miRNA-mediated cleavage of complementary mRNAs by RISC. Modulates cell cycle progression and global translation of pre-B cells, its activation seems to be rate-limiting in tumorigenesis and tumor growth. The sequence is that of Eukaryotic translation initiation factor 6 (Eif6) from Mus musculus (Mouse).